Here is a 212-residue protein sequence, read N- to C-terminus: Orotate phosphoribosyltransferase (212 aa).

5-phospho-alpha-D-ribose 1-diphosphate-binding positions include Arg94, Lys98, His100, and 120-128 (EDLISTGGS). Ser124 lines the orotate pocket.

This sequence belongs to the purine/pyrimidine phosphoribosyltransferase family. PyrE subfamily. In terms of assembly, homodimer. Mg(2+) is required as a cofactor.

The catalysed reaction is orotidine 5'-phosphate + diphosphate = orotate + 5-phospho-alpha-D-ribose 1-diphosphate. Its pathway is pyrimidine metabolism; UMP biosynthesis via de novo pathway; UMP from orotate: step 1/2. Functionally, catalyzes the transfer of a ribosyl phosphate group from 5-phosphoribose 1-diphosphate to orotate, leading to the formation of orotidine monophosphate (OMP). This Bacillus pumilus (strain SAFR-032) protein is Orotate phosphoribosyltransferase.